We begin with the raw amino-acid sequence, 210 residues long: Prolactin-2 (210 aa).

The N-terminal stretch at 1–23 (MARRSQGTKLHLAVLCLVVSCHA) is a signal peptide. 2 cysteine pairs are disulfide-bonded: Cys-69–Cys-183 and Cys-200–Cys-210.

The protein belongs to the somatotropin/prolactin family.

The protein localises to the secreted. The protein is Prolactin-2 (prl2) of Oncorhynchus tshawytscha (Chinook salmon).